A 613-amino-acid chain; its full sequence is MSSSVRLLLIVALLYTNSWAKTVKETLRITWEEGAPNGQARELIYTNGQFPGPPLIWDEGDDVEVTVWNEMAKNVTVHWHGLDQKDSPWSDGTPGLSQRPIQPGQSFVYKFKASPPGNHWYHSHEKMSLVDGLYGAIHIRPKEDRTGLWSQISQDKEDIKAMEKAARDPEYLVVSDWSQYTSEEYWKMSTDSGLLVFCLDSILVNGKGEVYCPGQEFLQKELAPGLVQDAFPPGTEVSDKGCFPADLDQVQGGPWNITKRPDLIPPRVQEGCVASKHENETIVVDPHRNNGWVSMHIVAAATIAQIAFSVDSHEFWLYEIDGNYVNPKKFVSAVMSAGETFSIMMKLDQEPGRYTMRVPNSGASQVLGAFAEMVYEGHERAEKSGRAYLSYGGNPTSPDVEKNSFFPWQLDTDHMSPWPANKPRPGKADEEHLLVLGRVGAPYKYTMNTKYLYPVDFQNNDPLLFYPDATCGTENDGLVLRTKNGSWVDLILQVSTLPGDTSSFEHFMHKHGSKTWRIGFGTGVWNYTSVEEAIQERPQDFNLETPGLRDTWITAFSIGGEAYWSVFRYYVDNPGPWLFHCHIELHLMGGMGIAILDGVDAWPEHIPEEYRLD.

The N-terminal stretch at Met1 to Ala20 is a signal peptide. Plastocyanin-like domains lie at Ile29 to Lys142, Tyr171 to Pro359, and Asp468 to Gly598. A glycan (N-linked (GlcNAc...) asparagine) is linked at Asn74. Residues His78, His80, His122, and His124 each coordinate Cu cation. Residues Asn256, Asn279, and Asn484 are each glycosylated (N-linked (GlcNAc...) asparagine). The Cu cation site is built by His506, His509, and His511. The N-linked (GlcNAc...) asparagine glycan is linked to Asn526. Cu cation is bound by residues His580, Cys581, His582, and His586.

Belongs to the multicopper oxidase family. Cu cation serves as cofactor.

Its subcellular location is the cell surface. It functions in the pathway pigment biosynthesis. In terms of biological role, laccase; part of the Pks1 gene cluster that mediates the biosynthesis of an anthraquinone derivative pigment that contributes to conidial pigmentation that provides protection from UV radiation, heat and cold stress. The polyketide synthase Pks1 produces 1-acetyl-2,4,6,8-tetrahydroxy-9,10-anthraquinone though condensation of acetyl-CoA with malonyl-CoA. The dehydratase EthD and the laccase Mlac1 further convert the anthraquinone derivative into the final conidial pigment. The polypeptide is Laccase 1 (Metarhizium acridum (strain CQMa 102)).